Reading from the N-terminus, the 1715-residue chain is Sodium channel protein type 4 subunit alpha B (1715 aa).

At 1-126 the chain is on the cytoplasmic side; sequence MGTLLPPVGS…IFAIKILVHS (126 aa). The stretch at 108-431 is one I repeat; sequence LLSPFNSMRI…VVAMAYAEQN (324 aa). A helical membrane pass occupies residues 127–145; the sequence is LFSLFIMATILTNCVFMTL. Over 146–152 the chain is Extracellular; sequence SDPPAWS. A helical membrane pass occupies residues 153-173; that stretch reads KTVEYVFTFIYTFEATIKVVS. The Cytoplasmic segment spans residues 174–187; that stretch reads RGFCVGQFTFLKDP. Residues 188-205 traverse the membrane as a helical segment; sequence WNWLDFMVISMAYLTELV. Topologically, residues 206–211 are extracellular; the sequence is DLGNVS. Residue Asn209 is glycosylated (N-linked (GlcNAc...) asparagine). The chain crosses the membrane as a helical span at residues 212–228; it reads VLRTFRVLRALKTITVI. The Cytoplasmic portion of the chain corresponds to 229-247; it reads PGLKTIVGALIQSVKKLAD. Residues 248-267 form a helical membrane-spanning segment; that stretch reads AMVLTVFCLSVFALIGLQLF. At 268–368 the chain is on the extracellular side; the sequence is MGNLRQKCVL…PNYGYTSYDS (101 aa). Residues Cys275 and Cys337 are joined by a disulfide bond. 3 N-linked (GlcNAc...) asparagine glycosylation sites follow: Asn284, Asn304, and Asn339. Cys346 and Cys352 form a disulfide bridge. The segment at residues 369 to 393 is an intramembrane region (pore-forming); the sequence is FGWAFLALFRLMTQDFWENLFQLTL. At 394-400 the chain is on the extracellular side; the sequence is RAAGKTY. Residues 401 to 421 traverse the membrane as a helical segment; sequence MIFFVVVIFLGSFYLINLILA. At 422-515 the chain is on the cytoplasmic side; it reads VVAMAYAEQN…RCLSAIVMDP (94 aa). Residues 497–768 form an II repeat; that stretch reads CCSCWRHLKR…QIAVNRIKRA (272 aa). A helical membrane pass occupies residues 516–534; the sequence is FVDLGITICIILNTIFMAM. Residues 535–545 lie on the Extracellular side of the membrane; sequence EHYPMSADFEE. Residues 546–565 form a helical membrane-spanning segment; sequence LLSVGNLVFTGIFTCEMVLK. The Cytoplasmic segment spans residues 566 to 579; sequence ILAMDPYFYFQVGW. The chain crosses the membrane as a helical span at residues 580–599; it reads NIFDSIIVTMSLVELGLANV. Topologically, residues 600–601 are extracellular; that stretch reads QG. The chain crosses the membrane as a helical span at residues 602 to 619; it reads LSVLRSFRLMRVFKLAKS. Topologically, residues 620 to 635 are cytoplasmic; sequence WPTLNMLIKIIGNSVG. The chain crosses the membrane as a helical span at residues 636-654; sequence ALGNLTLVLAIIVFIFAVV. Over 655-683 the chain is Extracellular; the sequence is GMQLFGKNYKDCVCRISEDCKLPRWHMND. A disulfide bond links Cys668 and Cys674. The pore-forming intramembrane region spans 684 to 704; it reads FFHAFLIIFRVLCGEWIDTMW. Topologically, residues 705–715 are extracellular; the sequence is DCMEVSGQTMC. Cys706 and Cys715 are disulfide-bonded. A helical transmembrane segment spans residues 716–734; that stretch reads LIVYMMVLVIGNLVVLNLF. Residues 735–915 are Cytoplasmic-facing; sequence LALLLSSFSG…ACFIIVENNY (181 aa). The disordered stretch occupies residues 824–865; sequence EAESDSEDSDDDDVDEDKHSRCDESSFCSTVQDPEVKENEAD. The segment covering 825-838 has biased composition (acidic residues); the sequence is AESDSEDSDDDDVD. One copy of the III repeat lies at 896-1211; that stretch reads KGKVWCNIRR…KKYYNAMKKL (316 aa). The chain crosses the membrane as a helical span at residues 916–933; the sequence is FESFIVFMILLSSGALAF. Topologically, residues 934–946 are extracellular; sequence EDIYLEKHQLIKT. The helical transmembrane segment at 947–965 threads the bilayer; that stretch reads ILEYADKVFTYVFVVEMVL. Residues 966–979 lie on the Cytoplasmic side of the membrane; sequence KWFAYGFKSYFSNA. Residues 980-998 traverse the membrane as a helical segment; sequence WCWLDFLIVDVSLVSLTAN. The Extracellular segment spans residues 999–1006; the sequence is ILGYSELG. A helical membrane pass occupies residues 1007–1025; it reads AIKSLRTLRALRPLRALSR. Residues 1026 to 1042 are Cytoplasmic-facing; the sequence is FEGMRVVVNALVGAVPS. Residues 1043 to 1062 traverse the membrane as a helical segment; that stretch reads IFNVLLVCLIFWLIFSIMGV. At 1063-1115 the chain is on the extracellular side; sequence NLFAGKFSYCFNETSQEQFDKKIVNNKTECIALIEANFTEVRWKNLKVNYDNV. Cys1072 and Cys1092 form a disulfide bridge. N-linked (GlcNAc...) asparagine glycosylation is found at Asn1074 and Asn1088. An intramembrane region (pore-forming) is located at residues 1116-1137; that stretch reads GIGYLSLLQVATFKGWMEIMYA. The Extracellular portion of the chain corresponds to 1138 to 1154; that stretch reads AVDSRDVESQPIYEVNI. The helical transmembrane segment at 1155–1176 threads the bilayer; that stretch reads YMYLYFVIFIIFGSFFTLNLFI. At 1177 to 1239 the chain is on the cytoplasmic side; that stretch reads GVIIDNFNQQ…LVFDLVTKQI (63 aa). The tract at residues 1195–1197 is important for rapid channel inactivation; sequence IFM. The stretch at 1220 to 1517 is one IV repeat; sequence VPRPENALQG…WEKFDPDATQ (298 aa). The helical transmembrane segment at 1240 to 1257 threads the bilayer; sequence FDVFIMVLICLNMVTMMV. Residues 1258 to 1268 lie on the Extracellular side of the membrane; it reads ETDEQTKEKED. Residues 1269–1287 traverse the membrane as a helical segment; sequence ILYWINVIFIVIFTTECIL. At 1288–1299 the chain is on the cytoplasmic side; that stretch reads KTIALRRHYFSI. The chain crosses the membrane as a helical span at residues 1300–1317; it reads GWNVFDFVVVILSILGLL. Over 1318–1330 the chain is Extracellular; the sequence is LADIIEKYFVSPT. The helical transmembrane segment at 1331-1347 threads the bilayer; it reads LFRVIRLARIGRVLRLI. At 1348-1366 the chain is on the cytoplasmic side; it reads RGAKGIRTLLFALMMSLPA. Residues 1367-1384 traverse the membrane as a helical segment; the sequence is LFNIGLLLFLIMFIFSIF. Topologically, residues 1385 to 1406 are extracellular; the sequence is GMSNFAYVKKEAMIDDMFNFET. The segment at residues 1407-1429 is an intramembrane region (pore-forming); it reads FGNSMICLFMITTSAGWDGLLSP. Residues 1430–1458 are Extracellular-facing; the sequence is IMNKPPDCDPDLENPGTTVRGNCGSPAIG. A disulfide bridge connects residues Cys1437 and Cys1452. Residues 1459–1481 traverse the membrane as a helical segment; it reads IVFFSTYIIMSFLVVVNMYIAII. At 1482 to 1715 the chain is on the cytoplasmic side; it reads LENFNVATEE…LGTSERESLV (234 aa). The 30-residue stretch at 1611–1640 folds into the IQ domain; sequence EEVAARVIQRAYRKYLLQRTVRLASFTYRE.

It belongs to the sodium channel (TC 1.A.1.10) family. Nav1.4/SCN4A subfamily. As to quaternary structure, voltage-gated sodium (Nav) channels consist of an ion-conducting alpha subunit which is functional on its own associated with regulatory beta subunits.

Its subcellular location is the cell membrane. The catalysed reaction is Na(+)(in) = Na(+)(out). In terms of biological role, pore-forming subunit of a voltage-gated sodium (Nav) channel that directly mediates the depolarizing phase of action potentials in excitable membranes. Navs, also called VGSCs (voltage-gated sodium channels) or VDSCs (voltage-dependent sodium channels), operate by switching between closed and open conformations depending on the voltage difference across the membrane. In the open conformation they allow Na(+) ions to selectively pass through the pore, along their electrochemical gradient. The influx of Na+ ions provokes membrane depolarization, initiating the propagation of electrical signals throughout cells and tissues. The sequence is that of Sodium channel protein type 4 subunit alpha B (scn4ab) from Tetraodon nigroviridis (Spotted green pufferfish).